The primary structure comprises 313 residues: Transcription factor MafB (313 aa).

2 disordered regions span residues 51–77 (QPTGSVSSTPISTPCSSVPSSPSFSPT) and 151–197 (MGLP…VEDR). The span at 55 to 76 (SVSSTPISTPCSSVPSSPSFSP) shows a compositional bias: low complexity. Residues 154–166 (PHHHPHHHQHQHH) are compositionally biased toward basic residues. Residues 167–192 (QTSPSPSGSSSSSQQLHHQQQHSSSS) show a composition bias toward low complexity. A basic motif region spans residues 225–250 (RLKQKRRTLKNRGYAQSCRYKRVQQK). Positions 225 to 288 (RLKQKRRTLK…DAYKIKCEKL (64 aa)) constitute a bZIP domain. A leucine-zipper region spans residues 253–274 (LEGEKTQLVQQVEQLKQEVSRL). A disordered region spans residues 292–313 (NSSNFREAGSTSDNPSSPEFFM).

Belongs to the bZIP family. Maf subfamily. In terms of assembly, homodimer or heterodimer with other bHLH-Zip transcription factors. Binds DNA as a homodimer or a heterodimer.

It is found in the nucleus. Acts as a transcriptional activator or repressor. Implicated in the regulation of cell-type specific gene expression and play a role in inductive events during lens development. In Xenopus laevis (African clawed frog), this protein is Transcription factor MafB (mafb).